A 77-amino-acid polypeptide reads, in one-letter code: Cell division topological specificity factor (77 aa).

This sequence belongs to the MinE family.

Its function is as follows. Prevents the cell division inhibition by proteins MinC and MinD at internal division sites while permitting inhibition at polar sites. This ensures cell division at the proper site by restricting the formation of a division septum at the midpoint of the long axis of the cell. The protein is Cell division topological specificity factor of Helicobacter pylori (strain P12).